We begin with the raw amino-acid sequence, 251 residues long: Probable transcriptional regulatory protein SYO3AOP1_0685 (251 aa).

Belongs to the TACO1 family.

The protein resides in the cytoplasm. In Sulfurihydrogenibium sp. (strain YO3AOP1), this protein is Probable transcriptional regulatory protein SYO3AOP1_0685.